The sequence spans 393 residues: NAD(P)H-quinone oxidoreductase subunit H, chloroplastic (393 aa).

Belongs to the complex I 49 kDa subunit family. As to quaternary structure, NDH is composed of at least 16 different subunits, 5 of which are encoded in the nucleus.

It is found in the plastid. The protein resides in the chloroplast thylakoid membrane. The catalysed reaction is a plastoquinone + NADH + (n+1) H(+)(in) = a plastoquinol + NAD(+) + n H(+)(out). It catalyses the reaction a plastoquinone + NADPH + (n+1) H(+)(in) = a plastoquinol + NADP(+) + n H(+)(out). In terms of biological role, NDH shuttles electrons from NAD(P)H:plastoquinone, via FMN and iron-sulfur (Fe-S) centers, to quinones in the photosynthetic chain and possibly in a chloroplast respiratory chain. The immediate electron acceptor for the enzyme in this species is believed to be plastoquinone. Couples the redox reaction to proton translocation, and thus conserves the redox energy in a proton gradient. This chain is NAD(P)H-quinone oxidoreductase subunit H, chloroplastic, found in Phaseolus vulgaris (Kidney bean).